The primary structure comprises 101 residues: Small ribosomal subunit protein bS18c (101 aa).

Basic residues predominate over residues 1–19 (MDKSKQPFRKSKRSFRRRL). The interval 1–24 (MDKSKQPFRKSKRSFRRRLPPIGS) is disordered.

The protein belongs to the bacterial ribosomal protein bS18 family. As to quaternary structure, part of the 30S ribosomal subunit.

Its subcellular location is the plastid. It localises to the chloroplast. The protein is Small ribosomal subunit protein bS18c of Amborella trichopoda.